The sequence spans 687 residues: Solute carrier organic anion transporter family member 1B2 (687 aa).

Over 1-28 the chain is Cytoplasmic; it reads MDHTQQSRKAAEAQPSRSKQTRFCDGFK. The helical transmembrane segment at 29 to 48 threads the bilayer; the sequence is LFLAALSFSYICKALGGVVM. Topologically, residues 49–67 are extracellular; it reads KSSITQIERRFDIPSSISG. A helical membrane pass occupies residues 68 to 88; that stretch reads LIDGGFEIGNLLVIVFVSYFG. Topologically, residues 89-94 are cytoplasmic; it reads SKLHRP. A helical transmembrane segment spans residues 95-119; the sequence is KLIGIGCFIMGIGSILTALPHFFMG. At 120–165 the chain is on the extracellular side; the sequence is YYKYAKENDIGSLGNSTLTCFINQMTSPTGPSPEIVEKGCEKGLKS. Residue Asn-134 is glycosylated (N-linked (GlcNAc...) asparagine). Residues 166-194 traverse the membrane as a helical segment; sequence HMWIYVLMGNMLRGIGETPIVPLGISYLD. The Cytoplasmic portion of the chain corresponds to 195–213; that stretch reads DFAKEGHTSMHLGTLHTIA. The chain crosses the membrane as a helical span at residues 214–234; sequence MIGPILGFIMSSVFAKIYVDV. The Extracellular portion of the chain corresponds to 235 to 252; the sequence is GYVDLNSVRITPNDARWV. A helical transmembrane segment spans residues 253–277; the sequence is GAWWLSFIVNGLLCITSSIPFFFLP. The Cytoplasmic segment spans residues 278–328; it reads KIPKRSQEERKNSVSLHAPKTDEEKKHMTNLTKQEEQDPSNMTGFLRSLRS. The tract at residues 286–311 is disordered; it reads ERKNSVSLHAPKTDEEKKHMTNLTKQ. Ser-290 and Ser-292 each carry phosphoserine. The helical transmembrane segment at 329–350 threads the bilayer; sequence ILTNEIYVIFLILTLLQVSGFI. Residues 351-370 lie on the Extracellular side of the membrane; the sequence is GSFTYLFKFIEQQFGRTASQ. A helical transmembrane segment spans residues 371 to 394; it reads ANFLLGIITIPTMATAMFLGGYIV. The Cytoplasmic segment spans residues 395–398; the sequence is KKFK. Residues 399 to 422 form a helical membrane-spanning segment; that stretch reads LTSVGIAKFVFFTSSVAYAFQFLY. The Extracellular segment spans residues 423–531; sequence FPLLCENKPF…YKCKTNYYFY (109 aa). Residues 450-507 form the Kazal-like domain; it reads DVPLSYCNSDCSCDKNQWEPICGENGVTYISPCLAGCKSFRGDKKPNNTEFYDCSCIS. 3 disulfide bridges follow: Cys-456/Cys-486, Cys-462/Cys-482, and Cys-471/Cys-505. N-linked (GlcNAc...) asparagine glycans are attached at residues Asn-496 and Asn-511. The helical transmembrane segment at 532-554 threads the bilayer; that stretch reads IILQVTVSFFTAMGSPSLILILM. Over 555 to 563 the chain is Cytoplasmic; sequence KSVQPELKS. A helical membrane pass occupies residues 564–589; that stretch reads LAMGFHSLIIRALGGILAPIYYGAFI. At 590-623 the chain is on the extracellular side; that stretch reads DRTCIKWSVTSCGKRGACRLYNSRLFGFSYLGLN. A helical membrane pass occupies residues 624-641; sequence LALKTPPLFLYVVLIYFT. The Cytoplasmic portion of the chain corresponds to 642 to 687; that stretch reads KRKYKRNDNKTLENGRQFTDEGNPDSVNKNGYYCVPYDEQSNETPL. Thr-660 bears the Phosphothreonine mark. Position 667 is a phosphoserine (Ser-667).

Belongs to the organo anion transporter (TC 2.A.60) family. Liver specific. Expression is highest in central perivenous hepatocytes and lowest in the periportal region. Isoform 1 predominates. Not detected in heart, brain, kidney, skeletal muscle, lung, testis or spleen.

The protein resides in the basolateral cell membrane. The catalysed reaction is estrone 3-sulfate(out) = estrone 3-sulfate(in). The enzyme catalyses taurocholate(out) = taurocholate(in). It carries out the reaction prostaglandin E2(out) = prostaglandin E2(in). It catalyses the reaction L-thyroxine(out) = L-thyroxine(in). Functionally, mediates the Na(+)-independent uptake of organic anions such as taurochlate, bromosulfophthalein and steroid conjugates (estrone 3-sulfate, 17-beta-glucuronosyl estradiol, dehydroepiandrosterone sulfate). Also transports prostaglandin E2 and L-thyroxine (T4). Shows a pH-sensitive substrate specificity which may be ascribed to the protonation state of the binding site and leads to a stimulation of substrate transport in an acidic microenvironment. Hydrogencarbonate/HCO3(-) acts as the probable counteranion that exchanges for organic anions. This chain is Solute carrier organic anion transporter family member 1B2 (Slco1b2), found in Rattus norvegicus (Rat).